A 197-amino-acid polypeptide reads, in one-letter code: dITP/XTP pyrophosphatase (197 aa).

8–13 (TGNPGK) is a binding site for substrate. Residues Glu-40 and Asp-69 each contribute to the Mg(2+) site. The active-site Proton acceptor is Asp-69. Residues Ser-70, 154-157 (FGYD), Lys-177, and 182-183 (HR) contribute to the substrate site.

Belongs to the HAM1 NTPase family. Homodimer. It depends on Mg(2+) as a cofactor.

It catalyses the reaction XTP + H2O = XMP + diphosphate + H(+). The enzyme catalyses dITP + H2O = dIMP + diphosphate + H(+). The catalysed reaction is ITP + H2O = IMP + diphosphate + H(+). Its function is as follows. Pyrophosphatase that catalyzes the hydrolysis of nucleoside triphosphates to their monophosphate derivatives, with a high preference for the non-canonical purine nucleotides XTP (xanthosine triphosphate), dITP (deoxyinosine triphosphate) and ITP. Seems to function as a house-cleaning enzyme that removes non-canonical purine nucleotides from the nucleotide pool, thus preventing their incorporation into DNA/RNA and avoiding chromosomal lesions. The chain is dITP/XTP pyrophosphatase from Pectobacterium atrosepticum (strain SCRI 1043 / ATCC BAA-672) (Erwinia carotovora subsp. atroseptica).